Here is a 542-residue protein sequence, read N- to C-terminus: Probable E3 ubiquitin-protein ligase ARI11 (542 aa).

Positions 1 to 25 are disordered; that stretch reads MSSSDRDIIDIESGEEDLYSDGGND. Residues 10 to 19 are compositionally biased toward acidic residues; sequence DIESGEEDLY. The TRIAD supradomain stretch occupies residues 135–342; sequence VDIQCGICFE…SDHKACNAFK (208 aa). The Zn(2+) site is built by C139, C142, C156, H158, C161, C164, C184, C189, C228, C233, C251, C253, C258, C261, H266, C271, C298, and C301. Residues 139 to 189 form an RING-type 1 zinc finger; that stretch reads CGICFESYTRKEIARVSCGHPYCKTCWTGYITTKIEDGPGCLRVKCPEPSC. Residues 208-271 form an IBR-type zinc finger; the sequence is DKYYRYFLRS…CEDAHSPVDC (64 aa). The segment at 298–328 adopts an RING-type 2; atypical zinc-finger fold; sequence CPKCKRPIEKNTGCNHMSCSAPCRHYFCWAC. C311 is an active-site residue. Zn(2+)-binding residues include C316, C320, C325, C328, H335, and C338.

Belongs to the RBR family. Ariadne subfamily. Zn(2+) is required as a cofactor.

It carries out the reaction [E2 ubiquitin-conjugating enzyme]-S-ubiquitinyl-L-cysteine + [acceptor protein]-L-lysine = [E2 ubiquitin-conjugating enzyme]-L-cysteine + [acceptor protein]-N(6)-ubiquitinyl-L-lysine.. It functions in the pathway protein modification; protein ubiquitination. Functionally, might act as an E3 ubiquitin-protein ligase, or as part of E3 complex, which accepts ubiquitin from specific E2 ubiquitin-conjugating enzymes and then transfers it to substrates. This Arabidopsis thaliana (Mouse-ear cress) protein is Probable E3 ubiquitin-protein ligase ARI11 (ARI11).